Here is a 307-residue protein sequence, read N- to C-terminus: Protoheme IX farnesyltransferase (307 aa).

9 helical membrane-spanning segments follow: residues 31–51 (VTQL…PGMV), 55–75 (VLIG…AINC), 103–123 (TLVF…VYAN), 125–145 (LTMW…TILL), 153–173 (IVIG…AVAG), 179–199 (AWFL…ALAL), 223–243 (LLHI…PFVY), 246–266 (SGYI…AYAW), and 285–305 (ILYL…KFVP).

This sequence belongs to the UbiA prenyltransferase family. Protoheme IX farnesyltransferase subfamily.

The protein resides in the cell inner membrane. It carries out the reaction heme b + (2E,6E)-farnesyl diphosphate + H2O = Fe(II)-heme o + diphosphate. It participates in porphyrin-containing compound metabolism; heme O biosynthesis; heme O from protoheme: step 1/1. Its function is as follows. Converts heme B (protoheme IX) to heme O by substitution of the vinyl group on carbon 2 of heme B porphyrin ring with a hydroxyethyl farnesyl side group. The polypeptide is Protoheme IX farnesyltransferase (Cupriavidus necator (strain ATCC 17699 / DSM 428 / KCTC 22496 / NCIMB 10442 / H16 / Stanier 337) (Ralstonia eutropha)).